The following is a 521-amino-acid chain: 2-isopropylmalate synthase (521 aa).

A Pyruvate carboxyltransferase domain is found at 12–274 (VIIFDTTLRD…WNKIDTTMLT (263 aa)). 4 residues coordinate Mn(2+): Asp-21, His-209, His-211, and Asn-245. The segment at 398–521 (KLVSLTVIAG…DMAAPAAAAS (124 aa)) is regulatory domain.

This sequence belongs to the alpha-IPM synthase/homocitrate synthase family. LeuA type 1 subfamily. In terms of assembly, homodimer. Mn(2+) is required as a cofactor.

Its subcellular location is the cytoplasm. It carries out the reaction 3-methyl-2-oxobutanoate + acetyl-CoA + H2O = (2S)-2-isopropylmalate + CoA + H(+). Its pathway is amino-acid biosynthesis; L-leucine biosynthesis; L-leucine from 3-methyl-2-oxobutanoate: step 1/4. Its function is as follows. Catalyzes the condensation of the acetyl group of acetyl-CoA with 3-methyl-2-oxobutanoate (2-ketoisovalerate) to form 3-carboxy-3-hydroxy-4-methylpentanoate (2-isopropylmalate). This chain is 2-isopropylmalate synthase, found in Rhodopseudomonas palustris (strain BisA53).